We begin with the raw amino-acid sequence, 462 residues long: Semenogelin-1 (462 aa).

The signal sequence occupies residues 1–23; that stretch reads MKPNIIFVLSLLLILEKQAAVMG. Residue Gln24 is modified to Pyrrolidone carboxylic acid. Positions 24 to 61 are disordered; that stretch reads QKGGSKGRLPSEFSQFPHGQKGQHYSGQKGKQQTESKG. Residues 46–61 show a composition bias toward polar residues; that stretch reads QHYSGQKGKQQTESKG. 3 consecutive repeat copies span residues 70 to 129, 141 to 200, and 201 to 260. The tract at residues 70–439 is repeat-rich region; that stretch reads HVDANDHDQS…SHGGLDIVII (370 aa). Disordered regions lie at residues 131-157 and 173-194; these read KGGK…GISS and KEQT…QSSY. Polar residues predominate over residues 138-157; that stretch reads GTQNPSQDQGNSPSGKGISS. The segment at 164–283 is interaction with EPPIN; the sequence is ERLWVHGLSK…NQDQQHGRKA (120 aa). Positions 261–380 are 2 X 60 AA tandem repeats, type 1; it reads LVYNKNQHQT…QRSIYSQTEK (120 aa). The disordered stretch occupies residues 270-432; sequence TKNLNQDQQH…KGRHQHGSHG (163 aa). Composition is skewed to polar residues over residues 308 to 317, 324 to 335, and 343 to 352; these read DVSQSSIYSQ, GKSQKQITIPSQ, and ANKISYQSSS. A 3-2 repeat occupies 381 to 439; it reads LVAGKSQIQAPNPKQEPWHGENAKGESGQSTNREQDLLSHEQKGRHQHGSHGGLDIVII. Residues 413–424 are compositionally biased toward basic and acidic residues; sequence REQDLLSHEQKG.

It belongs to the semenogelin family. In terms of assembly, occurs in disulfide-linked complexes which may also contain two less abundant 71- and 76-kDa semenogelin-related polypeptides. Interacts with EPPIN (via C-terminus); Cys-239 is a critical amino acid for both binding to EPPIN. Post-translationally, transglutaminase substrate. Rapidly cleaved after ejaculation by KLK3/PSA, resulting in liquefaction of the semen coagulum and the progressive release of motile spermatozoa. Seminal vesicle.

Its subcellular location is the secreted. Its function is as follows. Predominant protein in semen. It participates in the formation of a gel matrix entrapping the accessory gland secretions and ejaculated spermatozoa. Fragments of semenogelin and/or fragments of the related proteins may contribute to the activation of progressive sperm movements as the gel-forming proteins are fragmented by KLK3/PSA. Alpha-inhibin-92 and alpha-inhibin-31, derived from the proteolytic degradation of semenogelin, inhibit the secretion of pituitary follicle-stimulating hormone. The polypeptide is Semenogelin-1 (SEMG1) (Homo sapiens (Human)).